Reading from the N-terminus, the 319-residue chain is Cobalamin biosynthesis protein CobD (319 aa).

The next 4 helical transmembrane spans lie at 55–75 (AVMWLVVVGVTWAVSWGVLAL), 78–98 (EIHPWFGWLVEIWMIFTVLAG), 153–173 (VDGIIAPLFFLFLGGAPLAMA), and 296–316 (LMWVASTLALALFIAVRCLLV).

The protein belongs to the CobD/CbiB family.

The protein resides in the cell membrane. It functions in the pathway cofactor biosynthesis; adenosylcobalamin biosynthesis. Converts cobyric acid to cobinamide by the addition of aminopropanol on the F carboxylic group. The chain is Cobalamin biosynthesis protein CobD from Citrobacter koseri (strain ATCC BAA-895 / CDC 4225-83 / SGSC4696).